A 417-amino-acid polypeptide reads, in one-letter code: Ribonuclease T2-like (417 aa).

An N-terminal signal peptide occupies residues 1 to 22 (MSSISGFLGAIPGAQQILQTMA). 5 cysteine pairs are disulfide-bonded: cysteine 45-cysteine 63, cysteine 52-cysteine 99, cysteine 62-cysteine 165, cysteine 107-cysteine 157, and cysteine 229-cysteine 264. Histidine 92 is an active-site residue. Asparagine 115 is a glycosylation site (N-linked (GlcNAc...) asparagine). Residues glutamate 150 and histidine 154 contribute to the active site. Residues 274–296 (KTPNKDPGHGHEPTKTRHPHGPT) form a disordered region. Basic and acidic residues predominate over residues 276-288 (PNKDPGHGHEPTK). Asparagine 383 carries N-linked (GlcNAc...) asparagine glycosylation.

It belongs to the RNase T2 family.

It localises to the vacuole lumen. It is found in the cytoplasm. It catalyses the reaction a ribonucleotidyl-ribonucleotide-RNA + H2O = a 3'-end 3'-phospho-ribonucleotide-RNA + a 5'-end dephospho-ribonucleoside-RNA + H(+). Rnase which modulates cell survival under stress conditions. Released from the vacuole to the cytoplasm during stress to promote tRNA and rRNA cleavage and to activate separately a downstream pathway that promotes cell death. Involved in cell size, vacuolar morphology and growth at high temperatures and high salt concentration. The sequence is that of Ribonuclease T2-like (rny1) from Emericella nidulans (strain FGSC A4 / ATCC 38163 / CBS 112.46 / NRRL 194 / M139) (Aspergillus nidulans).